We begin with the raw amino-acid sequence, 750 residues long: Glycerophosphodiester phosphodiesterase GDPDL7 (750 aa).

The N-terminal stretch at 1–17 is a signal peptide; it reads MLRFIIFFSLFIHLCVA. 2 consecutive GP-PDE domains span residues 41 to 339 and 355 to 654; these read PAVV…SQSI and ALVI…TRYL. N-linked (GlcNAc...) asparagine glycans are attached at residues Asn134, Asn304, Asn603, and Asn716.

It belongs to the glycerophosphoryl diester phosphodiesterase family. As to expression, expressed in flowers and siliques.

It carries out the reaction a sn-glycero-3-phosphodiester + H2O = an alcohol + sn-glycerol 3-phosphate + H(+). In Arabidopsis thaliana (Mouse-ear cress), this protein is Glycerophosphodiester phosphodiesterase GDPDL7.